We begin with the raw amino-acid sequence, 64 residues long: Small ribosomal subunit protein bS21 (64 aa).

The protein belongs to the bacterial ribosomal protein bS21 family.

The polypeptide is Small ribosomal subunit protein bS21 (Anaeromyxobacter dehalogenans (strain 2CP-1 / ATCC BAA-258)).